Here is a 251-residue protein sequence, read N- to C-terminus: Putative F-box protein PP2-B12 (251 aa).

An F-box domain is found at 1 to 46 (MNFLDLPEECIATMISFTSPFDACRISAVSKLLRSAADSNTTWERF).

This is Putative F-box protein PP2-B12 (PP2B12) from Arabidopsis thaliana (Mouse-ear cress).